The following is a 441-amino-acid chain: Glutamate--tRNA ligase 1 (441 aa).

The short motif at 9-19 (PSPTGFIHVGN) is the 'HIGH' region element. Positions 239–243 (ALSKR) match the 'KMSKS' region motif. Lys-242 contributes to the ATP binding site.

This sequence belongs to the class-I aminoacyl-tRNA synthetase family. Glutamate--tRNA ligase type 1 subfamily. In terms of assembly, monomer.

The protein localises to the cytoplasm. It carries out the reaction tRNA(Glu) + L-glutamate + ATP = L-glutamyl-tRNA(Glu) + AMP + diphosphate. Catalyzes the attachment of glutamate to tRNA(Glu) in a two-step reaction: glutamate is first activated by ATP to form Glu-AMP and then transferred to the acceptor end of tRNA(Glu). The protein is Glutamate--tRNA ligase 1 of Cereibacter sphaeroides (strain ATCC 17025 / ATH 2.4.3) (Rhodobacter sphaeroides).